The sequence spans 628 residues: WW domain-containing adapter protein with coiled-coil (628 aa).

Disordered regions lie at residues 1 to 130 (MVMY…DDWS), 152 to 338 (EKPK…PQSP), and 417 to 532 (NQSP…SARS). Positions 37-49 (SSDHRHDKMRDST) are enriched in basic and acidic residues. Over residues 74 to 84 (GKAKSMHLHRV) the composition is skewed to basic residues. Low complexity predominate over residues 101–121 (NHSAIHSSNSHSSTPSKTSDS). The WW domain maps to 123–156 (YDPADDWSEHISSSGKKYYYNCRTEVSQWEKPKE). 2 stretches are compositionally biased toward basic and acidic residues: residues 152 to 168 (EKPK…KETS) and 176 to 185 (PKDRDYRREA). Over residues 199–213 (DTSTMLPQNILSQTS) the composition is skewed to polar residues. Residues 214–227 (RHNDRDYRLPRTDS) are compositionally biased toward basic and acidic residues. Composition is skewed to low complexity over residues 230 to 260 (SAAP…TVQP) and 299 to 331 (SDKS…TVPV). The segment covering 420 to 446 (PMSLTSDASSPRSYVSPRISTPQTNTV) has biased composition (polar residues). Low complexity predominate over residues 467 to 486 (GSKQGSSAQTASQQSSAADK). Positions 511 to 532 (PNHNSSTCASSTSAPQNSSARS) are enriched in polar residues. Positions 599-625 (QATLREQRILFLRQQIKELEKLKNQNS) form a coiled coil.

The protein resides in the nucleus. Its function is as follows. Acts as a linker between gene transcription and histone H2B monoubiquitination at 'Lys-120' (H2BK120ub1). Positive regulator of amino acid starvation-induced autophagy. Positively regulates MTOR activity. May negatively regulate the ubiquitin proteasome pathway. The sequence is that of WW domain-containing adapter protein with coiled-coil (wac) from Xenopus tropicalis (Western clawed frog).